The sequence spans 91 residues: MARSLKKGAFADESLLKKVDALNAANDKQVIKTWSRRSTIYPQFVGHTIAVHDGRKHVPVYVTEDMVGHKLGEFVATRTYRGHGKDEKKSR.

Belongs to the universal ribosomal protein uS19 family.

Its function is as follows. Protein S19 forms a complex with S13 that binds strongly to the 16S ribosomal RNA. In Lachnospira eligens (strain ATCC 27750 / DSM 3376 / VPI C15-48 / C15-B4) (Eubacterium eligens), this protein is Small ribosomal subunit protein uS19.